The primary structure comprises 432 residues: Pachytene checkpoint protein 2 homolog (432 aa).

At M1 the chain carries N-acetylmethionine. 179–186 contacts ATP; sequence GPPGTGKT.

It belongs to the AAA ATPase family. PCH2 subfamily. Specifically interacts with the ligand binding domain of the thyroid receptor (TR). This interaction does not require the presence of thyroid hormone for its interaction. Interacts with proteasome subunit PSMA8; to participate in meiosis progression during spermatogenesis. As to expression, widely expressed, including in testis.

In terms of biological role, plays a key role in chromosome recombination and chromosome structure development during meiosis. Required at early steps in meiotic recombination that leads to non-crossovers pathways. Also needed for efficient completion of homologous synapsis by influencing crossover distribution along the chromosomes affecting both crossovers and non-crossovers pathways. Also required for development of higher-order chromosome structures and is needed for synaptonemal-complex formation. In males, required for efficient synapsis of the sex chromosomes and for sex body formation. Promotes early steps of the DNA double-strand breaks (DSBs) repair process upstream of the assembly of RAD51 complexes. Required for depletion of HORMAD1 and HORMAD2 from synapsed chromosomes. Plays a role in mitotic spindle assembly checkpoint (SAC) activation. The polypeptide is Pachytene checkpoint protein 2 homolog (Trip13) (Mus musculus (Mouse)).